A 1898-amino-acid polypeptide reads, in one-letter code: 1-phosphatidylinositol 4,5-bisphosphate phosphodiesterase epsilon-1 (1898 aa).

Residues 66 to 328 (FPEEVAFQLS…EREQKEKEAK (263 aa)) enclose the Ras-GEF domain. Disordered regions lie at residues 419-444 (QPLD…GVGV) and 569-722 (TNTN…GPSG). A compositionally biased stretch (polar residues) spans 569–583 (TNTNATRPNDSSLSS). Residues 590 to 605 (SRLKNLKNAMQKKLRG) are compositionally biased toward basic residues. Composition is skewed to low complexity over residues 625–637 (PPSI…SQSG), 666–687 (YTPR…GGRS), and 701–716 (SGSI…QVSG). A PI-PLC X-box domain is found at 910–1058 (EDLRYPLSHY…MKNKILIKNK (149 aa)). Active-site residues include histidine 925 and histidine 970. Disordered stretches follow at residues 1082–1178 (QLNL…DRKT) and 1238–1274 (EEGP…STQL). Residues 1098-1123 (TVDEVEDDDLDEFLDDEENEEDDQEE) are compositionally biased toward acidic residues. Basic and acidic residues predominate over residues 1124-1144 (VQVRSEKEDSPKTSKRAEKSA). Residues 1146 to 1155 (NIKQQDSLCS) are compositionally biased toward polar residues. Composition is skewed to low complexity over residues 1163-1172 (KPSTSKTTSK) and 1242-1253 (ASASLSFSSRAR). The PI-PLC Y-box domain maps to 1279 to 1385 (AAEFLGSVRA…CGYQLKPRCL (107 aa)). The 127-residue stretch at 1391-1517 (LLYNKFLPLS…PLRTPTNLPI (127 aa)) folds into the C2 domain. The Ras-associating 1 domain maps to 1570-1665 (QIFVLRITGA…RRFVLRKKGS (96 aa)). The segment covering 1680-1694 (GTSGSSTSVSPSPLT) has biased composition (low complexity). Residues 1680–1711 (GTSGSSTSVSPSPLTKDGHVKSASSNQLHGRS) form a disordered region. The Ras-associating 2 domain maps to 1738–1857 (DTFLVCVHNV…GRFVLENRKD (120 aa)).

Interacts (via Ras-associating domain 1) with let-60 (in GTP-bound form). The cofactor is Ca(2+). Expressed in the spermatheca, vulva, intestine and excretory cells. Expressed in sensory neurons AWC, AFD, ASE, ASG and BAG, interneurons, ventral nerve cord neurons and tail neurons. Expressed in body muscles.

The enzyme catalyses a 1,2-diacyl-sn-glycero-3-phospho-(1D-myo-inositol-4,5-bisphosphate) + H2O = 1D-myo-inositol 1,4,5-trisphosphate + a 1,2-diacyl-sn-glycerol + H(+). In terms of biological role, the production of the second messenger molecules diacylglycerol (DAG) and inositol 1,4,5-trisphosphate (IP3) is mediated by activated phosphatidylinositol-specific phospholipase C enzymes. plc-1 is a bifunctional enzyme which also regulates small GTPases of the Ras superfamily through its Ras guanine-exchange factor (RasGEF) activity. By activating IP3 receptor itr-1-mediated intracellular Ca(2+) release via the production of IP3, regulates ovulation by controlling contraction and/or dilation of the distal spermatheca valve during oocyte entry and the timing of the dilation of the spermatheca-uterine valve during oocyte exit. In a similar manner, plays an essential role in epidermal morphogenesis by regulating migration of epidermal cells during ventral closure and to a lesser extent by regulating epidermal cell dorsal intercalation. Involved in the immune response to S.aureus bacterium by activating kinase dkf-1 via the production of DAG which in turn activates transcription factor hlh-30. In ASER neurons, required for adjusting the orientation behavior in salt gradients based on the memory of previous salt concentration encountered. In Caenorhabditis elegans, this protein is 1-phosphatidylinositol 4,5-bisphosphate phosphodiesterase epsilon-1.